The primary structure comprises 132 residues: ATP synthase epsilon chain (132 aa).

It belongs to the ATPase epsilon chain family. In terms of assembly, F-type ATPases have 2 components, CF(1) - the catalytic core - and CF(0) - the membrane proton channel. CF(1) has five subunits: alpha(3), beta(3), gamma(1), delta(1), epsilon(1). CF(0) has three main subunits: a, b and c.

It is found in the cell inner membrane. Functionally, produces ATP from ADP in the presence of a proton gradient across the membrane. This chain is ATP synthase epsilon chain, found in Anaeromyxobacter sp. (strain K).